A 145-amino-acid polypeptide reads, in one-letter code: MQRVTLSLDDDLMAEIDAIIRAGNYQNRSEVIRDLARAGLQSMAQAPSPSACCVAALFYVYDHESRELSKRLTRTFHDHHDLSLASLHVHLDHGSCLEVSLLKGAGGEVTRFAERVIAERGVRHGKLVVVPGDEGVAPPHPHSHD.

Residues His-77, His-88, His-90, and Cys-96 each contribute to the Ni(2+) site.

This sequence belongs to the transcriptional regulatory CopG/NikR family. Homotetramer. The cofactor is Ni(2+).

Transcriptional repressor of the nikABCDE operon. Is active in the presence of excessive concentrations of intracellular nickel. This Edwardsiella ictaluri (strain 93-146) protein is Nickel-responsive regulator.